Consider the following 126-residue polypeptide: Large ribosomal subunit protein bL19 (126 aa).

This sequence belongs to the bacterial ribosomal protein bL19 family.

Its function is as follows. This protein is located at the 30S-50S ribosomal subunit interface and may play a role in the structure and function of the aminoacyl-tRNA binding site. This chain is Large ribosomal subunit protein bL19, found in Nitrobacter winogradskyi (strain ATCC 25391 / DSM 10237 / CIP 104748 / NCIMB 11846 / Nb-255).